Reading from the N-terminus, the 239-residue chain is L-cystine transport system permease protein TcyL (239 aa).

An ABC transmembrane type-1 domain is found at 21–216; sequence LPVTLYILTL…AVAVLFEWFF (196 aa). Helical transmembrane passes span 25 to 45, 69 to 89, 96 to 116, and 196 to 216; these read LYILTLSLLFGFVLGLFLALP, IMVQLFIVFYGIPALTGLIGI, PFYAAVATYALSNAAAAAEII, and EVYIALSIVYYAVAVLFEWFF.

Belongs to the binding-protein-dependent transport system permease family. In terms of assembly, the complex is composed of two ATP-binding proteins (TcyN), two transmembrane proteins (TcyL and TcyM) and two solute-binding proteins (TcyJ and TcyK).

Its subcellular location is the cell membrane. Functionally, part of the ABC transporter complex TcyJKLMN involved in L-cystine import. Probably responsible for the translocation of the substrate across the membrane. Is also involved in cystathionine, djenkolate, and S-methylcysteine transport. The protein is L-cystine transport system permease protein TcyL (tcyL) of Bacillus subtilis (strain 168).